The sequence spans 778 residues: MVGMKVQHDGRLYSLDDERIVVYGGTLQYFRVPRNYWEDRLRKMKSHGLNTVETYIAWNWHEPQEGVFDFTGETHPQRDLIGFLELAQKLGLYVIIRPGPYICGEWKNGGIPDWLINSHPEILAKSPNGSFPRDVYYPPITYLHPTYLEYAMKWYEEVLPIIRDYLYSNGGSIISVTIDDEPSYWETIFQPFLTDYNEIIVRENGIWHSWLKENYSLGDLEERYGERFSDYTEIAPPKSFSEPLPKVLDWHHFKIWMINEYVRRLYEKIREYVDVPISLLDPYLLLAAWKEFYLYVTRHKLDIHLWTEFWYSFYRTFDFKEDKLGHLYFKTGIYRYYVSKLKTPPLSIETQASLANVIEKDEAELLYALLPALGIHNLNYYLYVGGENPRGYESHNGVTWDVYSPIGLDGRERQHVEPIKWIGEFLKSNIDFVDSQFKARVAFGMYEPYEALNLWGYKPESFEESVNLNEYLFGERGLLTLLAMSNVPFDVIDLEISTLEEMLQYEQIWVYSLDFMSREVQEKLIKYVEEGGNLVILPTLPYLDENMKPCTRLRDFLGVEVERAKARDNMRLIPYLSVDAEGIDRMVVRNVAREVKGGEAIAWIGDKVVGTIVRKGKGSAVILGFRLQYYSSYHDMHRKFVDKILQLQGVKREVEVSNRDIIAIPRIHYLVLVNPRDEEVAGKVKYRGVEFEIKMKGRGVLFIPVDVEINGVKLVYATATPIGGGNRRIKFRNHLSDTSEIAIRDGRIRGVKGGYVLQEKGERVYVIRHERETFEIEF.

Residues Tyr55, 104–105 (GE), 180–181 (DE), Glu308, Glu349, and Tyr381 contribute to the substrate site. Catalysis depends on Glu181, which acts as the Proton donor. Catalysis depends on Glu349, which acts as the Nucleophile.

This sequence belongs to the glycosyl hydrolase 35 family. Homodimer.

It is found in the cytoplasm. It carries out the reaction beta-D-glucosaminyl-(1-&gt;4)-N-acetyl-D-glucosamine + H2O = D-glucosamine + N-acetyl-D-glucosamine. Its pathway is glycan degradation; chitin degradation. Its function is as follows. Exo-type enzyme that specifically cleaves the non-reducing terminal glycosidic bond of chitooligosaccharides. Catalyzes the hydrolysis of GlcN-GlcNAc to glucosamine (GlcN) and N-acetylglucosamine (GlcNAc). Involved in chitin degradation. Can also hydrolyze chitosan and chitooligosaccharides of various chain lengths. This Pyrococcus horikoshii (strain ATCC 700860 / DSM 12428 / JCM 9974 / NBRC 100139 / OT-3) protein is Exo-beta-D-glucosaminidase.